Consider the following 78-residue polypeptide: Large ribosomal subunit protein bL28 (78 aa).

The segment at 1–25 (MSRVCQVTGKRPAVGNNRSHAKNAT) is disordered.

The protein belongs to the bacterial ribosomal protein bL28 family.

The chain is Large ribosomal subunit protein bL28 from Vibrio cholerae serotype O1 (strain ATCC 39541 / Classical Ogawa 395 / O395).